The chain runs to 163 residues: Dual specificity phosphatase 28 (163 aa).

A Tyrosine-protein phosphatase domain is found at 10–151; it reads PFARVAPALF…LQKYEQTLQA (142 aa). The active-site Phosphocysteine intermediate is the C95.

Belongs to the protein-tyrosine phosphatase family. Non-receptor class dual specificity subfamily. As to quaternary structure, monomer.

The catalysed reaction is O-phospho-L-tyrosyl-[protein] + H2O = L-tyrosyl-[protein] + phosphate. It catalyses the reaction O-phospho-L-seryl-[protein] + H2O = L-seryl-[protein] + phosphate. The enzyme catalyses O-phospho-L-threonyl-[protein] + H2O = L-threonyl-[protein] + phosphate. In terms of biological role, has phosphatase activity with the synthetic substrate 6,8-difluoro-4-methylumbelliferyl phosphate (in vitro). Has almost no detectable activity with phosphotyrosine, even less activity with phosphothreonine and displays complete lack of activity with phosphoserine. The poor activity with phosphotyrosine may be due to steric hindrance by bulky amino acid sidechains that obstruct access to the active site. The polypeptide is Dual specificity phosphatase 28 (Dusp28) (Mus musculus (Mouse)).